A 262-amino-acid chain; its full sequence is Thiazole synthase (262 aa).

The active-site Schiff-base intermediate with DXP is K104. 1-deoxy-D-xylulose 5-phosphate is bound by residues G165, 191–192 (AG), and 213–214 (NT).

This sequence belongs to the ThiG family. Homotetramer. Forms heterodimers with either ThiH or ThiS.

It is found in the cytoplasm. It carries out the reaction [ThiS sulfur-carrier protein]-C-terminal-Gly-aminoethanethioate + 2-iminoacetate + 1-deoxy-D-xylulose 5-phosphate = [ThiS sulfur-carrier protein]-C-terminal Gly-Gly + 2-[(2R,5Z)-2-carboxy-4-methylthiazol-5(2H)-ylidene]ethyl phosphate + 2 H2O + H(+). The protein operates within cofactor biosynthesis; thiamine diphosphate biosynthesis. Functionally, catalyzes the rearrangement of 1-deoxy-D-xylulose 5-phosphate (DXP) to produce the thiazole phosphate moiety of thiamine. Sulfur is provided by the thiocarboxylate moiety of the carrier protein ThiS. In vitro, sulfur can be provided by H(2)S. The protein is Thiazole synthase of Alkalilimnicola ehrlichii (strain ATCC BAA-1101 / DSM 17681 / MLHE-1).